The primary structure comprises 182 residues: Pyruvate synthase subunit PorC (182 aa).

In terms of assembly, heterotetramer of one alpha, one beta, one delta and one gamma chain.

The enzyme catalyses 2 oxidized [2Fe-2S]-[ferredoxin] + pyruvate + CoA = 2 reduced [2Fe-2S]-[ferredoxin] + acetyl-CoA + CO2 + H(+). This is Pyruvate synthase subunit PorC (porC) from Methanosarcina barkeri (strain Fusaro / DSM 804).